The chain runs to 190 residues: MASRGKSETIKLRQNLEEQLDRLMQQLQDLEECREELDGDEYEETKKETLEQLSEFNDSLKKIMSGNMTLIDELGGMQLAIQAAISQAFKTPEVIRMFAKKQPGQLRTRLAELDRDLMVGKLGRDLYTQQKGEILIALQKLGEKLSPEDEAFLSENAGAVFNQFQKVSEGLGSGDKVLALASIEVENTRK.

A coiled-coil region spans residues 3–63; that stretch reads SRGKSETIKL…SEFNDSLKKI (61 aa).

Belongs to the CTNNBIP1 family.

The chain is Protein LZIC (lzic) from Xenopus tropicalis (Western clawed frog).